The sequence spans 221 residues: Thiopurine S-methyltransferase (221 aa).

The S-adenosyl-L-methionine site is built by Trp-12, Leu-47, Glu-68, and Arg-125.

This sequence belongs to the class I-like SAM-binding methyltransferase superfamily. TPMT family.

Its subcellular location is the cytoplasm. It carries out the reaction S-adenosyl-L-methionine + a thiopurine = S-adenosyl-L-homocysteine + a thiopurine S-methylether.. The protein is Thiopurine S-methyltransferase of Legionella pneumophila (strain Corby).